The following is a 222-amino-acid chain: 3-dehydroquinate dehydratase (222 aa).

3-dehydroquinate is bound by residues 29–31 (ELR) and R55. H112 (proton donor/acceptor) is an active-site residue. The active-site Schiff-base intermediate with substrate is the K139. 3-dehydroquinate-binding residues include R178, S199, and Q203.

The protein belongs to the type-I 3-dehydroquinase family. In terms of assembly, homodimer.

It carries out the reaction 3-dehydroquinate = 3-dehydroshikimate + H2O. The protein operates within metabolic intermediate biosynthesis; chorismate biosynthesis; chorismate from D-erythrose 4-phosphate and phosphoenolpyruvate: step 3/7. In terms of biological role, involved in the third step of the chorismate pathway, which leads to the biosynthesis of aromatic amino acids. Catalyzes the cis-dehydration of 3-dehydroquinate (DHQ) and introduces the first double bond of the aromatic ring to yield 3-dehydroshikimate. In Dehalococcoides mccartyi (strain ATCC BAA-2100 / JCM 16839 / KCTC 5957 / BAV1), this protein is 3-dehydroquinate dehydratase.